A 158-amino-acid chain; its full sequence is SsrA-binding protein (158 aa).

The protein belongs to the SmpB family.

It localises to the cytoplasm. Functionally, required for rescue of stalled ribosomes mediated by trans-translation. Binds to transfer-messenger RNA (tmRNA), required for stable association of tmRNA with ribosomes. tmRNA and SmpB together mimic tRNA shape, replacing the anticodon stem-loop with SmpB. tmRNA is encoded by the ssrA gene; the 2 termini fold to resemble tRNA(Ala) and it encodes a 'tag peptide', a short internal open reading frame. During trans-translation Ala-aminoacylated tmRNA acts like a tRNA, entering the A-site of stalled ribosomes, displacing the stalled mRNA. The ribosome then switches to translate the ORF on the tmRNA; the nascent peptide is terminated with the 'tag peptide' encoded by the tmRNA and targeted for degradation. The ribosome is freed to recommence translation, which seems to be the essential function of trans-translation. The protein is SsrA-binding protein of Pseudoalteromonas atlantica (strain T6c / ATCC BAA-1087).